A 159-amino-acid polypeptide reads, in one-letter code: Large ribosomal subunit protein bL17 (159 aa).

Low complexity predominate over residues 119 to 138; the sequence is PVTPKAKPAKSTAKAAPKSK. A disordered region spans residues 119–159; it reads PVTPKAKPAKSTAKAAPKSKAPVEETPDEPASEETAEAEAD. Positions 143–159 are enriched in acidic residues; the sequence is ETPDEPASEETAEAEAD.

This sequence belongs to the bacterial ribosomal protein bL17 family. Part of the 50S ribosomal subunit. Contacts protein L32.

The sequence is that of Large ribosomal subunit protein bL17 from Leifsonia xyli subsp. xyli (strain CTCB07).